The following is a 435-amino-acid chain: Methylenetetrahydrofolate--tRNA-(uracil-5-)-methyltransferase TrmFO (435 aa).

9–14 contributes to the FAD binding site; that stretch reads GAGLAG.

Belongs to the MnmG family. TrmFO subfamily. The cofactor is FAD.

It localises to the cytoplasm. It catalyses the reaction uridine(54) in tRNA + (6R)-5,10-methylene-5,6,7,8-tetrahydrofolate + NADH + H(+) = 5-methyluridine(54) in tRNA + (6S)-5,6,7,8-tetrahydrofolate + NAD(+). It carries out the reaction uridine(54) in tRNA + (6R)-5,10-methylene-5,6,7,8-tetrahydrofolate + NADPH + H(+) = 5-methyluridine(54) in tRNA + (6S)-5,6,7,8-tetrahydrofolate + NADP(+). In terms of biological role, catalyzes the folate-dependent formation of 5-methyl-uridine at position 54 (M-5-U54) in all tRNAs. The polypeptide is Methylenetetrahydrofolate--tRNA-(uracil-5-)-methyltransferase TrmFO (Staphylococcus saprophyticus subsp. saprophyticus (strain ATCC 15305 / DSM 20229 / NCIMB 8711 / NCTC 7292 / S-41)).